Consider the following 238-residue polypeptide: Probable transcriptional regulatory protein SZO_02930 (238 aa).

This sequence belongs to the TACO1 family. YeeN subfamily.

The protein resides in the cytoplasm. This Streptococcus equi subsp. zooepidemicus (strain H70) protein is Probable transcriptional regulatory protein SZO_02930.